The primary structure comprises 158 residues: UPF0266 membrane protein YobD (158 aa).

3 helical membrane passes run 6–26 (LVLILFIAALLAFAIYDQFIM), 45–65 (IDSVIFVGLIVILIYNNVTNH), and 67–87 (ALITTWLLSALALMGFYIFWI).

This sequence belongs to the UPF0266 family.

Its subcellular location is the cell inner membrane. This chain is UPF0266 membrane protein YobD, found in Shigella boydii serotype 4 (strain Sb227).